A 243-amino-acid polypeptide reads, in one-letter code: Protein HUA2 (243 aa).

It localises to the cytoplasm. May have a role in actin patch assembly. This is Protein HUA2 (HUA2) from Saccharomyces cerevisiae (strain ATCC 204508 / S288c) (Baker's yeast).